The sequence spans 159 residues: Disease resistance response protein Pi176 (159 aa).

This sequence belongs to the BetVI family.

This Pisum sativum (Garden pea) protein is Disease resistance response protein Pi176.